A 276-amino-acid chain; its full sequence is Ribosomal RNA small subunit methyltransferase A (276 aa).

Residues N16, L18, G43, E64, D89, and N109 each contribute to the S-adenosyl-L-methionine site.

The protein belongs to the class I-like SAM-binding methyltransferase superfamily. rRNA adenine N(6)-methyltransferase family. RsmA subfamily.

It localises to the cytoplasm. The enzyme catalyses adenosine(1518)/adenosine(1519) in 16S rRNA + 4 S-adenosyl-L-methionine = N(6)-dimethyladenosine(1518)/N(6)-dimethyladenosine(1519) in 16S rRNA + 4 S-adenosyl-L-homocysteine + 4 H(+). In terms of biological role, specifically dimethylates two adjacent adenosines (A1518 and A1519) in the loop of a conserved hairpin near the 3'-end of 16S rRNA in the 30S particle. May play a critical role in biogenesis of 30S subunits. The polypeptide is Ribosomal RNA small subunit methyltransferase A (Marinobacter nauticus (strain ATCC 700491 / DSM 11845 / VT8) (Marinobacter aquaeolei)).